The chain runs to 205 residues: Carboxysome shell protein CsoS1D (205 aa).

BMC circularly permuted domains follow at residues 3 to 100 and 106 to 205; these read ELRT…TREY and VVMW…TCRS. The Gates the pore signature appears at 68 to 69; that stretch reads ER.

This sequence belongs to the EutL/PduB family. In terms of assembly, homotrimer. Forms a dimer of stacked trimers, the same faces interact. Probably forms a CsoS1-CsoS1D-CsoS2 complex.

It localises to the carboxysome. Part of the carboxysome shell, a polyhedral inclusion where RuBisCO (ribulose bisphosphate carboxylase, cbbL-cbbS) is sequestered. It may control transport of RuBisCO reactants in and out of the carboxysome. In Hydrogenovibrio crunogenus (strain DSM 25203 / XCL-2) (Thiomicrospira crunogena), this protein is Carboxysome shell protein CsoS1D.